The sequence spans 125 residues: Inner membrane protein YbaN (125 aa).

The Cytoplasmic portion of the chain corresponds to 1–6; sequence MQRIIL. The helical transmembrane segment at 7–26 threads the bilayer; the sequence is IIIGWLAVVLGTLGVVLPVL. The Periplasmic portion of the chain corresponds to 27–45; sequence PTTPFILLAAWCFARSSPR. The helical transmembrane segment at 46-63 threads the bilayer; that stretch reads FHAWLLYRSWFGSYLRFW. The Cytoplasmic portion of the chain corresponds to 64–74; that stretch reads QKHHAMPRGVK. A helical membrane pass occupies residues 75-92; it reads PRAILLILLTFAISLWFV. The Periplasmic portion of the chain corresponds to 93–95; that stretch reads QMP. The chain crosses the membrane as a helical span at residues 96–118; sequence WVRIMLLVILACLLFYMWRIPVI. Residues 119-125 lie on the Cytoplasmic side of the membrane; the sequence is DEKQEKH.

It localises to the cell inner membrane. In Escherichia coli O157:H7, this protein is Inner membrane protein YbaN (ybaN).